Reading from the N-terminus, the 162-residue chain is uncharacterized protein (162 aa).

The first 24 residues, 1–24 (MCKRFKFLLAVSALFISITVVLAG), serve as a signal peptide directing secretion. Residue C25 is the site of N-palmitoyl cysteine attachment. C25 is lipidated: S-diacylglycerol cysteine.

Its subcellular location is the cell membrane. This is an uncharacterized protein from Bacillus anthracis.